We begin with the raw amino-acid sequence, 424 residues long: Dihydroorotase (424 aa).

Zn(2+)-binding residues include His-60 and His-62. Residues 62-64 and Asn-94 contribute to the substrate site; that span reads HFR. Zn(2+)-binding residues include Asp-151, His-178, and His-231. A substrate-binding site is contributed by Asn-277. Asp-304 serves as a coordination point for Zn(2+). Asp-304 is an active-site residue. His-308 contributes to the substrate binding site.

It belongs to the metallo-dependent hydrolases superfamily. DHOase family. Class I DHOase subfamily. The cofactor is Zn(2+).

It catalyses the reaction (S)-dihydroorotate + H2O = N-carbamoyl-L-aspartate + H(+). It functions in the pathway pyrimidine metabolism; UMP biosynthesis via de novo pathway; (S)-dihydroorotate from bicarbonate: step 3/3. Functionally, catalyzes the reversible cyclization of carbamoyl aspartate to dihydroorotate. The polypeptide is Dihydroorotase (Clostridium acetobutylicum (strain ATCC 824 / DSM 792 / JCM 1419 / IAM 19013 / LMG 5710 / NBRC 13948 / NRRL B-527 / VKM B-1787 / 2291 / W)).